Reading from the N-terminus, the 286-residue chain is ATP synthase gamma chain (286 aa).

The protein belongs to the ATPase gamma chain family. As to quaternary structure, F-type ATPases have 2 components, CF(1) - the catalytic core - and CF(0) - the membrane proton channel. CF(1) has five subunits: alpha(3), beta(3), gamma(1), delta(1), epsilon(1). CF(0) has three main subunits: a, b and c.

It is found in the cell inner membrane. Its function is as follows. Produces ATP from ADP in the presence of a proton gradient across the membrane. The gamma chain is believed to be important in regulating ATPase activity and the flow of protons through the CF(0) complex. The polypeptide is ATP synthase gamma chain (Shewanella denitrificans (strain OS217 / ATCC BAA-1090 / DSM 15013)).